We begin with the raw amino-acid sequence, 323 residues long: tRNA U34 carboxymethyltransferase (323 aa).

Residues lysine 91, tryptophan 105, lysine 110, glycine 130, 152 to 154, 181 to 182, methionine 196, tyrosine 200, and arginine 315 each bind carboxy-S-adenosyl-L-methionine; these read DPT and IE.

This sequence belongs to the class I-like SAM-binding methyltransferase superfamily. CmoB family. As to quaternary structure, homotetramer.

The catalysed reaction is carboxy-S-adenosyl-L-methionine + 5-hydroxyuridine(34) in tRNA = 5-carboxymethoxyuridine(34) in tRNA + S-adenosyl-L-homocysteine + H(+). Its function is as follows. Catalyzes carboxymethyl transfer from carboxy-S-adenosyl-L-methionine (Cx-SAM) to 5-hydroxyuridine (ho5U) to form 5-carboxymethoxyuridine (cmo5U) at position 34 in tRNAs. The sequence is that of tRNA U34 carboxymethyltransferase from Photorhabdus laumondii subsp. laumondii (strain DSM 15139 / CIP 105565 / TT01) (Photorhabdus luminescens subsp. laumondii).